The sequence spans 119 residues: Large ribosomal subunit protein bL20 (119 aa).

This sequence belongs to the bacterial ribosomal protein bL20 family.

In terms of biological role, binds directly to 23S ribosomal RNA and is necessary for the in vitro assembly process of the 50S ribosomal subunit. It is not involved in the protein synthesizing functions of that subunit. The protein is Large ribosomal subunit protein bL20 of Clostridium tetani (strain Massachusetts / E88).